Here is an 80-residue protein sequence, read N- to C-terminus: Large ribosomal subunit protein bL28 (80 aa).

The disordered stretch occupies residues 1 to 23 (MARVCQITGKKTRTGNNVSHANN).

It belongs to the bacterial ribosomal protein bL28 family.

This chain is Large ribosomal subunit protein bL28, found in Cytophaga hutchinsonii (strain ATCC 33406 / DSM 1761 / CIP 103989 / NBRC 15051 / NCIMB 9469 / D465).